The chain runs to 356 residues: Heat-inducible transcription repressor HrcA (356 aa).

The protein belongs to the HrcA family.

In terms of biological role, negative regulator of class I heat shock genes (grpE-dnaK-dnaJ and groELS operons). Prevents heat-shock induction of these operons. The polypeptide is Heat-inducible transcription repressor HrcA (Chlorobaculum tepidum (strain ATCC 49652 / DSM 12025 / NBRC 103806 / TLS) (Chlorobium tepidum)).